We begin with the raw amino-acid sequence, 457 residues long: Putative metabolite transport protein YwtG (457 aa).

The next 12 helical transmembrane spans lie at 7–27 (IWLY…TGVI), 38–58 (LGLN…GAIL), 75–95 (AIMA…LAPN), 97–117 (GVMV…TTIV), 136–156 (LNQL…YIFA), 163–183 (WMLG…LFMP), 240–260 (ALIA…NTII), 276–296 (ASIL…LVAI), 309–329 (LFGN…NLFF), 340–360 (VICL…VVWV), 377–397 (VSTL…PILM), and 400–420 (IGIS…FLFV). Residues 438–457 (DLRDKNGQGGAAGKQQTVGT) form a disordered region.

Belongs to the major facilitator superfamily. Sugar transporter (TC 2.A.1.1) family.

The protein resides in the cell membrane. This Bacillus subtilis (strain 168) protein is Putative metabolite transport protein YwtG (ywtG).